We begin with the raw amino-acid sequence, 313 residues long: Olfactory receptor 4M2 (313 aa).

The Extracellular portion of the chain corresponds to 1–25; it reads METANYTKVTEFVLTGLSQTPEVQL. N5 is a glycosylation site (N-linked (GlcNAc...) asparagine). Residues 26 to 49 traverse the membrane as a helical segment; it reads VLFVIFLSFYLFILPGNILIICTI. Over 50 to 57 the chain is Cytoplasmic; the sequence is SLDPHLTS. The helical transmembrane segment at 58–79 threads the bilayer; that stretch reads PMYFLLANLAFLDIWYSSITAP. Over 80–100 the chain is Extracellular; sequence EMLIDFFVERKIISFDGCIAQ. An intrachain disulfide couples C97 to C189. A helical transmembrane segment spans residues 101-120; the sequence is LFFLHFAGASEMFLLTVMAF. The Cytoplasmic portion of the chain corresponds to 121–139; the sequence is DLYTAICRPLHYATIMNQR. A helical membrane pass occupies residues 140–158; it reads LCCILVALSWRGGFIHSII. The Extracellular segment spans residues 159-195; that stretch reads QVALIVRLPFCGPNELDSYFCDITQVVRIACANTFPE. A helical transmembrane segment spans residues 196–219; it reads ELVMICSSGLISVVCLIALLMSYA. Topologically, residues 220–237 are cytoplasmic; sequence FLLALFKKLSGSGENTNR. Residues 238–260 form a helical membrane-spanning segment; sequence AMSTCYSHITIVVLMFGPSIYIY. The Extracellular segment spans residues 261–271; sequence ARPFDSFSLDK. A helical membrane pass occupies residues 272 to 291; sequence VVSVFNTLIFPLRNPIIYTL. The Cytoplasmic segment spans residues 292–313; sequence RNKEVKAAMRKLVTKYILCKEK.

This sequence belongs to the G-protein coupled receptor 1 family.

Its subcellular location is the cell membrane. Odorant receptor. The polypeptide is Olfactory receptor 4M2 (OR4M2) (Homo sapiens (Human)).